The chain runs to 396 residues: Tryptophan synthase beta chain (396 aa).

Lys88 carries the N6-(pyridoxal phosphate)lysine modification.

Belongs to the TrpB family. In terms of assembly, tetramer of two alpha and two beta chains. Requires pyridoxal 5'-phosphate as cofactor.

The catalysed reaction is (1S,2R)-1-C-(indol-3-yl)glycerol 3-phosphate + L-serine = D-glyceraldehyde 3-phosphate + L-tryptophan + H2O. It participates in amino-acid biosynthesis; L-tryptophan biosynthesis; L-tryptophan from chorismate: step 5/5. In terms of biological role, the beta subunit is responsible for the synthesis of L-tryptophan from indole and L-serine. This Actinobacillus pleuropneumoniae serotype 5b (strain L20) protein is Tryptophan synthase beta chain.